The following is a 67-amino-acid chain: Conotoxin ArMLCL-012 (67 aa).

Positions 1–19 (MLCLPVFIILLLLASPAAS) are cleaved as a signal peptide. Residues 20 to 45 (NPLEKRIQSDLIRAALEDADTKNDPR) constitute a propeptide that is removed on maturation. A Cysteine amide modification is found at cysteine 64.

This sequence belongs to the conotoxin T superfamily. In terms of processing, contains 2 disulfide bonds that can be either 'C1-C3, C2-C4' or 'C1-C4, C2-C3', since these disulfide connectivities have been observed for conotoxins with cysteine framework V (for examples, see AC P0DQQ7 and AC P81755). In terms of tissue distribution, expressed by the venom duct.

The protein resides in the secreted. The sequence is that of Conotoxin ArMLCL-012 from Conus arenatus (Sand-dusted cone).